We begin with the raw amino-acid sequence, 489 residues long: Putative general negative regulator of transcription C16C9.04c (489 aa).

The RING-type zinc-finger motif lies at 18-61 (CPLCMEEIDISDKNFKPCQCGYRVCRFCWHHIKEDLNGRCPACR). The stretch at 76–109 (AEEWKMDLHRKNERKKREKERKEVELSNRKHLAN) forms a coiled coil. The RRM domain maps to 116 to 198 (NLAYVNGLSP…VSDGRHLRAS (83 aa)). Residues 199 to 226 (YGTTKYCTSYLRNQQCPNPSCMYLHEPG) form a C3H1-type zinc finger. Composition is skewed to polar residues over residues 246 to 261 (LSTK…HSPS) and 466 to 479 (ENQP…NNGN). Disordered regions lie at residues 246–268 (LSTK…PFKT) and 458–489 (VPEQ…GFQS).

Its subcellular location is the nucleus. Its function is as follows. May negatively regulate the basal and activated transcription of many genes. This Schizosaccharomyces pombe (strain 972 / ATCC 24843) (Fission yeast) protein is Putative general negative regulator of transcription C16C9.04c.